A 413-amino-acid polypeptide reads, in one-letter code: Transcription factor E2F4 (413 aa).

The disordered stretch occupies residues M1 to K20. A2 is subject to N-acetylalanine. The DNA-binding element occupies S16 to G85. The interval L43–L65 is leucine-zipper. Residues D48 to G85 carry the DEF box motif. Residues P86 to I181 are dimerization. The disordered stretch occupies residues P211–A340. Polar residues-rich tracts occupy residues A234–P249 and T293–D306. Low complexity predominate over residues S307–S327. Residues P337–L413 are transactivation. At S384 the chain carries Phosphoserine. The HCFC1-binding-motif (HBM) motif lies at D389–Y392. The segment at H390–D407 is interaction with RBL1 and RBL2.

This sequence belongs to the E2F/DP family. As to quaternary structure, component of the DRTF1/E2F transcription factor complex. Binds cooperatively with TFDP1/Dp-1 to E2F sites. The E2F4/TFDP1 dimer interacts preferentially with pocket protein RBL1, which inhibits the E2F transactivation domain. Lower affinity interaction has been found with retinoblastoma protein RB1. Interacts with TRRAP, which probably mediates its interaction with histone acetyltransferase complexes, leading to transcription activation. Interacts with HCFC1. Component of the DREAM complex (also named LINC complex) at least composed of E2F4, E2F5, LIN9, LIN37, LIN52, LIN54, MYBL1, MYBL2, RBL1, RBL2, RBBP4, TFDP1 and TFDP2. The complex exists in quiescent cells where it represses cell cycle-dependent genes. It dissociates in S phase when LIN9, LIN37, LIN52 and LIN54 form a subcomplex that binds to MYBL2. Interacts with PML (isoform PML-1, isoform PML-2, isoform PML-3, isoform PML-4 and isoform PML-5). Interacts with CEBPA (when phosphorylated). Differentially phosphorylated in vivo. In terms of tissue distribution, found in all tissue examined including heart, brain, placenta, lung, liver, skeletal muscle, kidney and pancreas.

It is found in the nucleus. Its function is as follows. Transcription activator that binds DNA cooperatively with DP proteins through the E2 recognition site, 5'-TTTC[CG]CGC-3' found in the promoter region of a number of genes whose products are involved in cell cycle regulation or in DNA replication. The DRTF1/E2F complex functions in the control of cell-cycle progression from G1 to S phase. E2F4 binds with high affinity to RBL1 and RBL2. In some instances can also bind RB1. Specifically required for multiciliate cell differentiation: together with MCIDAS and E2F5, binds and activate genes required for centriole biogenesis. This Homo sapiens (Human) protein is Transcription factor E2F4 (E2F4).